Reading from the N-terminus, the 621-residue chain is Chaperone protein HscA homolog (621 aa).

Belongs to the heat shock protein 70 family.

Chaperone involved in the maturation of iron-sulfur cluster-containing proteins. Has a low intrinsic ATPase activity which is markedly stimulated by HscB. In Polynucleobacter necessarius subsp. necessarius (strain STIR1), this protein is Chaperone protein HscA homolog.